A 354-amino-acid chain; its full sequence is Uroporphyrinogen decarboxylase (354 aa).

Residues 27 to 31, D77, Y154, S209, and H327 each bind substrate; that span reads RQAGR.

The protein belongs to the uroporphyrinogen decarboxylase family. As to quaternary structure, homodimer.

It localises to the cytoplasm. The enzyme catalyses uroporphyrinogen III + 4 H(+) = coproporphyrinogen III + 4 CO2. It participates in porphyrin-containing compound metabolism; protoporphyrin-IX biosynthesis; coproporphyrinogen-III from 5-aminolevulinate: step 4/4. In terms of biological role, catalyzes the decarboxylation of four acetate groups of uroporphyrinogen-III to yield coproporphyrinogen-III. This chain is Uroporphyrinogen decarboxylase, found in Pseudoalteromonas translucida (strain TAC 125).